The sequence spans 319 residues: ATP-dependent 6-phosphofructokinase (319 aa).

Position 11 (glycine 11) interacts with ATP. Residue 21–25 (RAVVR) coordinates ADP. Residues 72 to 73 (RC) and 102 to 105 (GDGS) each bind ATP. Aspartate 103 provides a ligand contact to Mg(2+). 125-127 (TID) contacts substrate. Residue aspartate 127 is the Proton acceptor of the active site. An ADP-binding site is contributed by arginine 154. Substrate contacts are provided by residues arginine 162 and 169 to 171 (MGR). ADP contacts are provided by residues 185–187 (GAE), arginine 211, and 213–215 (KKH). Residues glutamate 222, arginine 243, and 249 to 252 (HIQR) contribute to the substrate site.

Belongs to the phosphofructokinase type A (PFKA) family. ATP-dependent PFK group I subfamily. Prokaryotic clade 'B1' sub-subfamily. As to quaternary structure, homotetramer. The cofactor is Mg(2+).

The protein resides in the cytoplasm. The catalysed reaction is beta-D-fructose 6-phosphate + ATP = beta-D-fructose 1,6-bisphosphate + ADP + H(+). It participates in carbohydrate degradation; glycolysis; D-glyceraldehyde 3-phosphate and glycerone phosphate from D-glucose: step 3/4. Allosterically activated by ADP and other diphosphonucleosides, and allosterically inhibited by phosphoenolpyruvate. In terms of biological role, catalyzes the phosphorylation of D-fructose 6-phosphate to fructose 1,6-bisphosphate by ATP, the first committing step of glycolysis. This is ATP-dependent 6-phosphofructokinase from Halalkalibacterium halodurans (strain ATCC BAA-125 / DSM 18197 / FERM 7344 / JCM 9153 / C-125) (Bacillus halodurans).